The chain runs to 320 residues: 3-oxoacyl-[acyl-carrier-protein] reductase 1, chloroplastic (320 aa).

A chloroplast-targeting transit peptide spans 1–60; the sequence is MATTVAATKLTSLKAVKKLGFREIRQVRQWSPLQSAMPHFGMLRCGSRQSFATSTVVKAQ. Residue 82-106 participates in NADP(+) binding; that stretch reads VTGASRGIGKAIALSLGKAGCKVLV. Ser214 contacts substrate. Tyr227 (proton acceptor) is an active-site residue.

The protein belongs to the short-chain dehydrogenases/reductases (SDR) family. In terms of assembly, homotetramer.

The protein resides in the plastid. It is found in the chloroplast. The catalysed reaction is a (3R)-hydroxyacyl-[ACP] + NADP(+) = a 3-oxoacyl-[ACP] + NADPH + H(+). Its pathway is lipid metabolism; fatty acid biosynthesis. In Brassica napus (Rape), this protein is 3-oxoacyl-[acyl-carrier-protein] reductase 1, chloroplastic (gbkr1).